Consider the following 200-residue polypeptide: LHFPL tetraspan subfamily member 6 protein (200 aa).

The signal sequence occupies residues 1–21 (MASSLTCTGVIWALLSFLCAA). The next 3 membrane-spanning stretches (helical) occupy residues 84 to 104 (ICTIVTGLGCGLLLLVALTAL), 123 to 143 (GIQFLGGLLIGAGCALYPLGW), and 166 to 186 (IGWAYYCTGAGATAAMLLCTW).

This sequence belongs to the LHFP family. As to expression, pancreas, kidney, skeletal muscle, liver, lung brain, heart, colon, small intestine, uterus, testis, prostate, thymus, spleen and placenta.

It localises to the membrane. The polypeptide is LHFPL tetraspan subfamily member 6 protein (Homo sapiens (Human)).